A 165-amino-acid polypeptide reads, in one-letter code: Protein SprT (165 aa).

The 142-residue stretch at 22–163 folds into the SprT-like domain; sequence LAQANLKLGR…RCVHCGEQLT (142 aa). Histidine 78 contacts Zn(2+). Residue glutamate 79 is part of the active site. Position 82 (histidine 82) interacts with Zn(2+).

The protein belongs to the SprT family. Requires Zn(2+) as cofactor.

It localises to the cytoplasm. The polypeptide is Protein SprT (Escherichia fergusonii (strain ATCC 35469 / DSM 13698 / CCUG 18766 / IAM 14443 / JCM 21226 / LMG 7866 / NBRC 102419 / NCTC 12128 / CDC 0568-73)).